We begin with the raw amino-acid sequence, 114 residues long: Lymphotactin (114 aa).

The signal sequence occupies residues 1 to 21 (MRLLLLTFLGVCCLTPWVVEG). Cys32 and Cys69 form a disulfide bridge. The disordered stretch occupies residues 92–114 (KNMAETVPTGAQRSTSTAITLTG). Residues 100 to 114 (TGAQRSTSTAITLTG) are compositionally biased toward polar residues.

Belongs to the intercrine gamma family. Expressed in activated CD8(+) T cells. In the thymus, expressed by medullary thymic epithelial cells.

It localises to the secreted. Chemotactic activity for lymphocytes but not for monocytes or neutrophils. In thymus, mediates medullary accumulation of thymic dendritic cells and contributes to regulatoy T cell development, playing a role in self-tolerance establishment. The chain is Lymphotactin (Xcl1) from Mus musculus (Mouse).